The chain runs to 24 residues: Cryptonin (24 aa).

Its function is as follows. Antimicrobial peptide, active against the Gram-negative bacterium E.coli K12-594 (MIC=3.12 ug/ml), the Gram-positive bacteria B.subtilis KCTC 3086 (MIC=3.12 ug/ml), S.aureus KCTC 1928 (MIC=25 ug/ml) and M.luteus KCTC 3063 (MIC=1.56 ug/ml), the antibiotic resistant bacteria methicillin-resistant S.aureus (MRSA) (MIC=25 ug/ml) and vancomycin-resistant Enterococci (VRE) (MIC=25 ug/ml), and the fungi C.albicans KCTC 7965 (MIC=50 ug/ml) and C.tropicalis KCTC 1925 (MIC=3.12 ug/ml). Has very low hemolytic activity on rat erythrocytes. This Cryptotympana dubia (Korean horse cicada) protein is Cryptonin.